Reading from the N-terminus, the 480-residue chain is Proline--tRNA ligase (480 aa).

This sequence belongs to the class-II aminoacyl-tRNA synthetase family. ProS type 3 subfamily. As to quaternary structure, homodimer.

Its subcellular location is the cytoplasm. It catalyses the reaction tRNA(Pro) + L-proline + ATP = L-prolyl-tRNA(Pro) + AMP + diphosphate. Catalyzes the attachment of proline to tRNA(Pro) in a two-step reaction: proline is first activated by ATP to form Pro-AMP and then transferred to the acceptor end of tRNA(Pro). This chain is Proline--tRNA ligase, found in Methanosarcina mazei (strain ATCC BAA-159 / DSM 3647 / Goe1 / Go1 / JCM 11833 / OCM 88) (Methanosarcina frisia).